A 518-amino-acid polypeptide reads, in one-letter code: Crotonobetaine/carnitine--CoA ligase (518 aa).

This sequence belongs to the ATP-dependent AMP-binding enzyme family.

The enzyme catalyses 4-(trimethylamino)butanoate + ATP + CoA = 4-(trimethylamino)butanoyl-CoA + AMP + diphosphate. It carries out the reaction crotonobetaine + ATP + CoA = crotonobetainyl-CoA + AMP + diphosphate. It catalyses the reaction (R)-carnitine + ATP + CoA = (R)-carnitinyl-CoA + AMP + diphosphate. It participates in amine and polyamine metabolism; carnitine metabolism. Catalyzes the transfer of CoA to carnitine, generating the initial carnitinyl-CoA needed for the CaiB reaction cycle. Also has activity toward crotonobetaine and gamma-butyrobetaine. This is Crotonobetaine/carnitine--CoA ligase from Proteus sp. (strain LE138).